The following is a 335-amino-acid chain: MKTYYEQDANVGLLQGKTVAVIGYGSQGHAQAQNLRDSGVEVVVGVRPGKSFEVAKADGFEVMSVSEAVRTAQVVQMLLPDEQQAHVYKAEVEENLREGQMLLFSHGFNIHFGQINPPSYVDVAMVAPKSPGHLVRRVFQEGNGVPALVAVHQDATGTALHVALAYAKGVGCTRAGVIETTFQEETETDLFGEQAVLCGGVTALVKAGFETLTEGGYRPEIAYFECLHELKLIVDLMYEGGLTNMRHSISDTAEFGDYVTGSRIVTDETKKEMKRVLTEIQQGEFAKKWILENQAGRPTYNAMKKAEQNHQLEKVGEELREMMSWIHAPKELVKK.

Residues Met-1–Thr-180 form the KARI N-terminal Rossmann domain. NADP(+) is bound by residues Tyr-24–Gln-27, Arg-47, Ser-51, and Asp-81–Gln-84. His-106 is an active-site residue. Position 132 (Gly-132) interacts with NADP(+). The KARI C-terminal knotted domain occupies Thr-181–Ile-326. 4 residues coordinate Mg(2+): Asp-189, Glu-193, Glu-225, and Glu-229. Ser-250 is a substrate binding site.

This sequence belongs to the ketol-acid reductoisomerase family. The cofactor is Mg(2+).

It catalyses the reaction (2R)-2,3-dihydroxy-3-methylbutanoate + NADP(+) = (2S)-2-acetolactate + NADPH + H(+). The catalysed reaction is (2R,3R)-2,3-dihydroxy-3-methylpentanoate + NADP(+) = (S)-2-ethyl-2-hydroxy-3-oxobutanoate + NADPH + H(+). It participates in amino-acid biosynthesis; L-isoleucine biosynthesis; L-isoleucine from 2-oxobutanoate: step 2/4. It functions in the pathway amino-acid biosynthesis; L-valine biosynthesis; L-valine from pyruvate: step 2/4. Involved in the biosynthesis of branched-chain amino acids (BCAA). Catalyzes an alkyl-migration followed by a ketol-acid reduction of (S)-2-acetolactate (S2AL) to yield (R)-2,3-dihydroxy-isovalerate. In the isomerase reaction, S2AL is rearranged via a Mg-dependent methyl migration to produce 3-hydroxy-3-methyl-2-ketobutyrate (HMKB). In the reductase reaction, this 2-ketoacid undergoes a metal-dependent reduction by NADPH to yield (R)-2,3-dihydroxy-isovalerate. The sequence is that of Ketol-acid reductoisomerase (NADP(+)) 2 from Bacillus anthracis.